The following is a 568-amino-acid chain: Cyclin-dependent kinase-like 2 (568 aa).

Residues 4–289 (YENLGLVGEG…CADLLRHDFF (286 aa)) form the Protein kinase domain. ATP contacts are provided by residues 10 to 18 (VGEGSYGMV) and Lys33. The [NKR]KIAxRE motif lies at 45-51 (KKIAMRE). Asp126 (proton acceptor) is an active-site residue. Disordered regions lie at residues 309 to 333 (DARN…LGEE) and 545 to 568 (SHQG…EHQH). Positions 322 to 333 (RKKEKDDALGEE) are enriched in basic and acidic residues.

It belongs to the protein kinase superfamily. CMGC Ser/Thr protein kinase family. CDC2/CDKX subfamily. Expressed in testis, kidney, lung and brain.

It is found in the cytoplasm. It localises to the nucleus. It carries out the reaction L-seryl-[protein] + ATP = O-phospho-L-seryl-[protein] + ADP + H(+). It catalyses the reaction L-threonyl-[protein] + ATP = O-phospho-L-threonyl-[protein] + ADP + H(+). The polypeptide is Cyclin-dependent kinase-like 2 (Mus musculus (Mouse)).